A 247-amino-acid polypeptide reads, in one-letter code: Carboxy-S-adenosyl-L-methionine synthase (247 aa).

Residues Tyr39, 64-66, 89-90, 117-118, Asn132, and Arg199 contribute to the S-adenosyl-L-methionine site; these read GCS, DN, and DI.

Belongs to the class I-like SAM-binding methyltransferase superfamily. Cx-SAM synthase family. Homodimer.

The catalysed reaction is prephenate + S-adenosyl-L-methionine = carboxy-S-adenosyl-L-methionine + 3-phenylpyruvate + H2O. In terms of biological role, catalyzes the conversion of S-adenosyl-L-methionine (SAM) to carboxy-S-adenosyl-L-methionine (Cx-SAM). This Pectobacterium atrosepticum (strain SCRI 1043 / ATCC BAA-672) (Erwinia carotovora subsp. atroseptica) protein is Carboxy-S-adenosyl-L-methionine synthase.